Reading from the N-terminus, the 432-residue chain is C(50) beta-cyclic carotenoids biosynthesis protein LbtBC (432 aa).

The beta-cyclase stretch occupies residues 1–140; that stretch reads MTSLYTTLNL…DDDEVRTPER (140 aa). Helical transmembrane passes span 4–24, 36–56, and 83–103; these read LYTTLNLTMSIPVVAVALLAA, LIGVGGALLILMILTAVFDNI, and FAYAVAAAVFVPSVWALLTAS. The tract at residues 111 to 140 is disordered; sequence GSPTVSGRGDALLTRAPEPGDDDEVRTPER. Positions 141–432 are elongase/hydratase; that stretch reads PGTPGLLTTL…IVLWSVLVWS (292 aa). 7 helical membrane passes run 170–190, 252–272, 277–297, 299–319, 350–370, 374–394, and 409–429; these read YFLATGGFDLVGVIGTIFFLV, ESSLWLAASAFAVIAYSAKGL, IPFLDSLTSAFHFVSPAIVGW, IAGAELTGGVWACLIAFMLWG, AAVWFALACYVAAVVVLLAAA, ASGAAFAILPYLATVAAYVGV, and FLVLNMLAGFCVTQIVLWSVL.

It belongs to the UbiA prenyltransferase family. As to quaternary structure, may form a complex with LbtA.

It localises to the cell membrane. The catalysed reaction is all-trans-lycopene + dimethylallyl diphosphate + H2O = dihydroisopentenyldehydrorhodopin + diphosphate. The enzyme catalyses isopentenyldehydrorhodopin + dimethylallyl diphosphate + H2O = dihydrobisanhydrobacterioruberin + diphosphate. The protein operates within carotenoid biosynthesis. Its function is as follows. Involved in the biosynthesis of C(50) beta-cyclic carotenoids. The elongase/hydratase domain catalyzes the elongation of lycopene by attaching a C(5) isoprene unit at C-2, as well as the hydroxylation of the previous end of the molecule. The enzyme acts at both ends of the substrate, and catalyzes the conversion of lycopene to the C(45) intermediate dihydroisopentenyldehydrorhodopin (DH-IDR) and the conversion of isopentenyldehydrorhodopin (IDR) to the C(50) carotenoid dihydrobisanhydrobacterioruberin (DH-BABR). The beta-cyclase domain may produce the C(50) beta-cyclic carotenoid C.p.450 from the C(50) carotenoid dihydrobisanhydrobacterioruberin (DH-BABR). The sequence is that of C(50) beta-cyclic carotenoids biosynthesis protein LbtBC from Dietzia sp. (strain CQ4).